The chain runs to 438 residues: GDP-mannose 6-dehydrogenase (438 aa).

Residues Y10, V11, D30, K35, T86, and T124 each contribute to the NAD(+) site. 10 residues coordinate GDP-alpha-D-mannuronate: E161, K210, N214, H217, N225, Y256, Y257, R259, F262, and G265. The active site involves C268. Position 271 (K271) interacts with NAD(+). K324 provides a ligand contact to GDP-alpha-D-mannuronate. R331 contacts NAD(+).

It belongs to the UDP-glucose/GDP-mannose dehydrogenase family.

The catalysed reaction is GDP-alpha-D-mannose + 2 NAD(+) + H2O = GDP-alpha-D-mannuronate + 2 NADH + 3 H(+). The protein operates within glycan biosynthesis; alginate biosynthesis. Catalyzes the oxidation of guanosine diphospho-D-mannose (GDP-D-mannose) to GDP-D-mannuronic acid, a precursor for alginate polymerization. The alginate layer causes a mucoid phenotype and provides a protective barrier against host immune defenses and antibiotics. The sequence is that of GDP-mannose 6-dehydrogenase (algD) from Pseudomonas syringae pv. tomato (strain ATCC BAA-871 / DC3000).